The primary structure comprises 315 residues: Coproporphyrin III ferrochelatase (315 aa).

Residues Tyr-13, Arg-30, Arg-46–Tyr-47, Ser-54, and Tyr-125 each bind Fe-coproporphyrin III. Fe(2+) is bound by residues His-183 and Glu-264.

This sequence belongs to the ferrochelatase family.

The protein resides in the cytoplasm. It carries out the reaction Fe-coproporphyrin III + 2 H(+) = coproporphyrin III + Fe(2+). It functions in the pathway porphyrin-containing compound metabolism; protoheme biosynthesis. Its function is as follows. Involved in coproporphyrin-dependent heme b biosynthesis. Catalyzes the insertion of ferrous iron into coproporphyrin III to form Fe-coproporphyrin III. The protein is Coproporphyrin III ferrochelatase of Anoxybacillus flavithermus (strain DSM 21510 / WK1).